The following is a 390-amino-acid chain: Phosphopentomutase (390 aa).

Positions 9, 283, 288, 324, 325, and 336 each coordinate Mn(2+).

The protein belongs to the phosphopentomutase family. Requires Mn(2+) as cofactor.

Its subcellular location is the cytoplasm. The enzyme catalyses 2-deoxy-alpha-D-ribose 1-phosphate = 2-deoxy-D-ribose 5-phosphate. The catalysed reaction is alpha-D-ribose 1-phosphate = D-ribose 5-phosphate. It functions in the pathway carbohydrate degradation; 2-deoxy-D-ribose 1-phosphate degradation; D-glyceraldehyde 3-phosphate and acetaldehyde from 2-deoxy-alpha-D-ribose 1-phosphate: step 1/2. Its function is as follows. Isomerase that catalyzes the conversion of deoxy-ribose 1-phosphate (dRib-1-P) and ribose 1-phosphate (Rib-1-P) to deoxy-ribose 5-phosphate (dRib-5-P) and ribose 5-phosphate (Rib-5-P), respectively. The polypeptide is Phosphopentomutase (Thermotoga petrophila (strain ATCC BAA-488 / DSM 13995 / JCM 10881 / RKU-1)).